The sequence spans 105 residues: UPF0145 protein Aflv_1588 (105 aa).

This sequence belongs to the UPF0145 family.

In Anoxybacillus flavithermus (strain DSM 21510 / WK1), this protein is UPF0145 protein Aflv_1588.